A 23-amino-acid chain; its full sequence is Paralytic peptide 2 (23 aa).

The cysteines at positions 7 and 19 are disulfide-linked.

Belongs to the GBP/PSP1/paralytic peptide family. Hemolymph.

Functionally, causes rapid, rigid paralysis when injected into Lepidopteran larvae. The physiological role may be to reduce hemolymph loss following injury and promote wound healing. The chain is Paralytic peptide 2 from Spodoptera exigua (Beet armyworm).